We begin with the raw amino-acid sequence, 372 residues long: THAP domain-containing protein 5 (372 aa).

Residues 1 to 85 form a THAP-type zinc finger; it reads MTRYCAATRC…LKPNAIPTLF (85 aa). Residues 306–362 adopt a coiled-coil conformation; the sequence is TDRHYLRQKIAKLQSKIAVLEAQENATLSRLRLLESVIAKLKQENLLSDEKLKILEN.

The protein resides in the nucleus. The polypeptide is THAP domain-containing protein 5 (thap5) (Xenopus laevis (African clawed frog)).